Consider the following 472-residue polypeptide: MKFLLFMFVGVVHLLPLASGKAIYGNGPSQRTFQEIKEEIAHYGDVAKSIINLTVYGKAQNRSYERLALLVDTVGPRLSGSKNLERAIEIMQQNLKGDGLENVHLEPVKIPHWERGEESAVMLEPRIHKMAILGLGSSIGTPPEGITAEVLVVTSFDELQRRGPDAEGKIVVYNQPYTNYSAAVQYRMEGAVEAAKVGALASLIRSVASFSIYSPHTGIQEYQKGVPKIPTACITVEDAEMMSRMASRGNRIVVQLKMGAKSYPDADSFNTVAEITGSKYPEQVVLVSGHLDSWDVGQGAMDDGGGAFISWEALSLIKDLGLRPKRTLRLVLWTAEEQGGVGSSQYYQLHKANSSNYSLVMESDLGTFLPSGLKFTGSDKARVIMEEVMSLLQPINITQVLKAGDGTDINFWIQDGVPGASLLDDLYKYFSFHHSHGDTMTVMDPKQMNVAAAVWAVVSYVVADLEEMLPRS.

A signal peptide spans 1–20 (MKFLLFMFVGVVHLLPLASG). A propeptide spanning residues 21–44 (KAIYGNGPSQRTFQEIKEEIAHYG) is cleaved from the precursor. N-linked (GlcNAc...) asparagine glycosylation is found at Asn-52, Asn-61, and Asn-179. The Zn(2+) site is built by His-290 and Asp-302. Catalysis depends on Glu-336, which acts as the Nucleophile. Glu-337 serves as a coordination point for Zn(2+). N-linked (GlcNAc...) asparagine glycans are attached at residues Asn-353 and Asn-356. Asp-364 is a Zn(2+) binding site. Residue Asn-396 is glycosylated (N-linked (GlcNAc...) asparagine). His-434 is a binding site for Zn(2+).

This sequence belongs to the peptidase M28 family. Homodimer. The monomeric form is inactive while the homodimer is active. In terms of processing, N-glycosylated. The secreted form is modified by hybrid or complex type oligosaccharide chains.

It is found in the endoplasmic reticulum. The protein resides in the golgi apparatus. Its subcellular location is the lysosome. The protein localises to the secreted. Its function is as follows. Carboxypeptidase that may play an important role in the hydrolysis of circulating peptides. Catalyzes the hydrolysis of dipeptides with unsubstituted terminals into amino acids. May play a role in the liberation of thyroxine hormone from its thyroglobulin (Tg) precursor. In Bos taurus (Bovine), this protein is Carboxypeptidase Q (CPQ).